The primary structure comprises 361 residues: Phosphoserine aminotransferase (361 aa).

Residue arginine 42 participates in L-glutamate binding. Pyridoxal 5'-phosphate contacts are provided by residues alanine 76–arginine 77, tryptophan 102, threonine 153, aspartate 173, and glutamine 196. The residue at position 197 (lysine 197) is an N6-(pyridoxal phosphate)lysine. Residue asparagine 238–threonine 239 coordinates pyridoxal 5'-phosphate.

Belongs to the class-V pyridoxal-phosphate-dependent aminotransferase family. SerC subfamily. In terms of assembly, homodimer. Pyridoxal 5'-phosphate serves as cofactor.

Its subcellular location is the cytoplasm. The enzyme catalyses O-phospho-L-serine + 2-oxoglutarate = 3-phosphooxypyruvate + L-glutamate. The catalysed reaction is 4-(phosphooxy)-L-threonine + 2-oxoglutarate = (R)-3-hydroxy-2-oxo-4-phosphooxybutanoate + L-glutamate. It participates in amino-acid biosynthesis; L-serine biosynthesis; L-serine from 3-phospho-D-glycerate: step 2/3. The protein operates within cofactor biosynthesis; pyridoxine 5'-phosphate biosynthesis; pyridoxine 5'-phosphate from D-erythrose 4-phosphate: step 3/5. Catalyzes the reversible conversion of 3-phosphohydroxypyruvate to phosphoserine and of 3-hydroxy-2-oxo-4-phosphonooxybutanoate to phosphohydroxythreonine. This is Phosphoserine aminotransferase from Pectobacterium atrosepticum (strain SCRI 1043 / ATCC BAA-672) (Erwinia carotovora subsp. atroseptica).